The chain runs to 442 residues: MVGPSGESMPRNFKPETIALHGGQEPDPTTTSRAVPLYQTTSYVFKDTDHAARLFGLQEFGNIYTRLMNPTTDVLEKRVAALEGGVAALATASGQSAEMLALLNIVEAGQEIVASSSLYGGTYNLLHYTFPKLGIKVHFVDQSDPENFRKASNDKTRAFYAETLGNPKLDTLDIAAVSKVAKEVGVPLVIDNTMPSPYLVNPLKHGADIVVHSLTKFLGGHGTSIGGIIIDGGSFNWGNGKFKNFTEPDPSYHGLKFWEVFGKFEPFGGVNIAFILKARVQGLRDLGPAISPFNAWQILQGVETLPLRMERHSGNALKVAEFLQKHPKIEWVNYPGLSTDKNYATAKKYHERGLFGAIVGFEIKGGVEKAKKFIDGLELFSLLANIGDAKSLAIHPASTTHQQLTGPEQISAGVTPGFVRLSVGLENIDDILVDLEEALKNI.

Residues Met-1–Ser-32 are disordered. An N6-(pyridoxal phosphate)lysine modification is found at Lys-216.

It belongs to the trans-sulfuration enzymes family. Pyridoxal 5'-phosphate is required as a cofactor.

The catalysed reaction is O-acetyl-L-homoserine + hydrogen sulfide = L-homocysteine + acetate. It participates in amino-acid biosynthesis; L-methionine biosynthesis via de novo pathway; L-homocysteine from O-acetyl-L-homoserine: step 1/1. With respect to regulation, feedback inhibited at very high concentrations of methionine or S-adenosylmethionine. Functionally, catalyzes the conversion of O-acetyl-L-homoserine (OAH) into homocysteine in the methionine biosynthesis pathway. Can also use O-succinyl-homoserine (OSH), although at low efficiency. This Leptospira meyeri protein is O-acetyl-L-homoserine sulfhydrylase.